The sequence spans 167 residues: Glutathione peroxidase-like peroxiredoxin 1 (167 aa).

The active-site Cysteine sulfenic acid (-SOH) intermediate is the C36. Cysteines 36 and 82 form a disulfide.

Belongs to the glutathione peroxidase family. As to quaternary structure, monomer.

The protein resides in the peroxisome matrix. Its subcellular location is the mitochondrion outer membrane. It carries out the reaction 2 glutathione + H2O2 = glutathione disulfide + 2 H2O. The enzyme catalyses a hydroperoxide + [thioredoxin]-dithiol = an alcohol + [thioredoxin]-disulfide + H2O. In terms of biological role, glutathione peroxidase-like protein that protects cells from phospholipid hydroperoxides and nonphospholipid peroxides during oxidative stress. Has peroxidase activity using thioredoxin or glutathione as a reducing power. Involved in peroxisome formation. The sequence is that of Glutathione peroxidase-like peroxiredoxin 1 from Saccharomyces cerevisiae (strain ATCC 204508 / S288c) (Baker's yeast).